Here is a 165-residue protein sequence, read N- to C-terminus: Putative universal stress protein SH1215 (165 aa).

Belongs to the universal stress protein A family.

It is found in the cytoplasm. This is Putative universal stress protein SH1215 from Staphylococcus haemolyticus (strain JCSC1435).